A 235-amino-acid polypeptide reads, in one-letter code: MAELDPFGAPAGAPGGPALGNGVAGAGEEDPAAAFLAQQESEIAGIENDEAFAILDGGAPGRATRRAAGGPDAVDGVMNGEYYQESNGPTDSYAAISEVDRLQSEPESIRKWREEQTERLEALDANSRKQEAEWKEKAIKELEEWYARQDEQLQKTKANNRVADEAFYKQPFADLIGYVAAEEAFVNDIDESSPGTEWERVARLCDFNPKSSKQAKDVSRMRSVLISLKQAPLVH.

Residues 1-32 form a disordered region; that stretch reads MAELDPFGAPAGAPGGPALGNGVAGAGEEDPA. Over residues 13–25 the composition is skewed to gly residues; sequence APGGPALGNGVAG. The interval 99–161 is involved in binding clathrin heavy chain; the sequence is VDRLQSEPES…QLQKTKANNR (63 aa). A phosphoserine mark is found at S104 and S193. K210 carries the post-translational modification N6-acetyllysine. S223 bears the Phosphoserine mark. An N6-acetyllysine modification is found at K229.

The protein belongs to the clathrin light chain family. Clathrin coats are formed from molecules containing 3 heavy chains and 3 light chains. Interacts with CALY; the interaction stimulates clathrin self-assembly and clathrin-mediated endocytosis. Interacts with CKAP5 and TACC3 forming the TACC3/ch-TOG/clathrin complex located at spindle inter-microtubules bridges; the complex implicates clathrin triskelions.

It is found in the cytoplasmic vesicle membrane. The protein localises to the membrane. It localises to the coated pit. The protein resides in the cytoplasm. Its subcellular location is the cytoskeleton. It is found in the spindle. Its function is as follows. Clathrin is the major protein of the polyhedral coat of coated pits and vesicles. Acts as a component of the TACC3/ch-TOG/clathrin complex proposed to contribute to stabilization of kinetochore fibers of the mitotic spindle by acting as inter-microtubule bridge. The sequence is that of Clathrin light chain A (Clta) from Mus musculus (Mouse).